A 278-amino-acid polypeptide reads, in one-letter code: 4-deoxy-L-threo-5-hexosulose-uronate ketol-isomerase (278 aa).

Residues His-196, His-198, Glu-203, and His-245 each contribute to the Zn(2+) site.

Belongs to the KduI family. Homohexamer. The cofactor is Zn(2+).

The enzyme catalyses 5-dehydro-4-deoxy-D-glucuronate = 3-deoxy-D-glycero-2,5-hexodiulosonate. It functions in the pathway glycan metabolism; pectin degradation; 2-dehydro-3-deoxy-D-gluconate from pectin: step 4/5. Catalyzes the isomerization of 5-dehydro-4-deoxy-D-glucuronate to 3-deoxy-D-glycero-2,5-hexodiulosonate. The protein is 4-deoxy-L-threo-5-hexosulose-uronate ketol-isomerase of Escherichia coli O8 (strain IAI1).